Reading from the N-terminus, the 430-residue chain is Phosphomethylpyrimidine synthase (430 aa).

Residues N67, M96, Y125, H161, 183–185 (SRG), 224–227 (DALR), and E263 each bind substrate. H267 lines the Zn(2+) pocket. A substrate-binding site is contributed by Y290. H331 serves as a coordination point for Zn(2+). Residues C406, C409, and C413 each contribute to the [4Fe-4S] cluster site.

Belongs to the ThiC family. In terms of assembly, homodimer. It depends on [4Fe-4S] cluster as a cofactor.

The catalysed reaction is 5-amino-1-(5-phospho-beta-D-ribosyl)imidazole + S-adenosyl-L-methionine = 4-amino-2-methyl-5-(phosphooxymethyl)pyrimidine + CO + 5'-deoxyadenosine + formate + L-methionine + 3 H(+). Its pathway is cofactor biosynthesis; thiamine diphosphate biosynthesis. In terms of biological role, catalyzes the synthesis of the hydroxymethylpyrimidine phosphate (HMP-P) moiety of thiamine from aminoimidazole ribotide (AIR) in a radical S-adenosyl-L-methionine (SAM)-dependent reaction. The protein is Phosphomethylpyrimidine synthase of Campylobacter jejuni subsp. jejuni serotype O:6 (strain 81116 / NCTC 11828).